A 279-amino-acid chain; its full sequence is Ribosomal RNA small subunit methyltransferase A (279 aa).

S-adenosyl-L-methionine is bound by residues Asn25, Leu27, Gly52, Glu73, Asp98, and Asn120.

The protein belongs to the class I-like SAM-binding methyltransferase superfamily. rRNA adenine N(6)-methyltransferase family. RsmA subfamily.

It is found in the cytoplasm. The catalysed reaction is adenosine(1518)/adenosine(1519) in 16S rRNA + 4 S-adenosyl-L-methionine = N(6)-dimethyladenosine(1518)/N(6)-dimethyladenosine(1519) in 16S rRNA + 4 S-adenosyl-L-homocysteine + 4 H(+). In terms of biological role, specifically dimethylates two adjacent adenosines (A1518 and A1519) in the loop of a conserved hairpin near the 3'-end of 16S rRNA in the 30S particle. May play a critical role in biogenesis of 30S subunits. This is Ribosomal RNA small subunit methyltransferase A from Magnetococcus marinus (strain ATCC BAA-1437 / JCM 17883 / MC-1).